Reading from the N-terminus, the 39-residue chain is Contryphan-Cal4 (39 aa).

An N-terminal signal peptide occupies residues 1–20 (MTRTAVLLLTLLFLVAMAAS). C29 and C35 are oxidised to a cystine.

Expressed by the venom duct.

The protein localises to the secreted. Its function is as follows. Probable neurotoxin. The polypeptide is Contryphan-Cal4 (Californiconus californicus (California cone)).